The primary structure comprises 135 residues: Large ribosomal subunit protein uL16c (135 aa).

This sequence belongs to the universal ribosomal protein uL16 family. Part of the 50S ribosomal subunit.

It is found in the plastid. The protein resides in the chloroplast. The sequence is that of Large ribosomal subunit protein uL16c from Piper cenocladum (Ant piper).